Consider the following 238-residue polypeptide: Small ribosomal subunit protein uS3 (238 aa).

The region spanning 39-107 is the KH type-2 domain; the sequence is MREFIHDYAK…ELHLNIVEIR (69 aa). Positions 212–222 are enriched in basic and acidic residues; it reads PQAHDRRHSEA. The disordered stretch occupies residues 212-238; that stretch reads PQAHDRRHSEAQEGAAPRPPRRDRERA.

It belongs to the universal ribosomal protein uS3 family. As to quaternary structure, part of the 30S ribosomal subunit. Forms a tight complex with proteins S10 and S14.

Its function is as follows. Binds the lower part of the 30S subunit head. Binds mRNA in the 70S ribosome, positioning it for translation. The polypeptide is Small ribosomal subunit protein uS3 (Cereibacter sphaeroides (strain ATCC 17025 / ATH 2.4.3) (Rhodobacter sphaeroides)).